The chain runs to 147 residues: Large ribosomal subunit protein bL9 (147 aa).

The protein belongs to the bacterial ribosomal protein bL9 family.

Its function is as follows. Binds to the 23S rRNA. This chain is Large ribosomal subunit protein bL9, found in Clostridium botulinum (strain ATCC 19397 / Type A).